Here is a 450-residue protein sequence, read N- to C-terminus: Nuclear hormone receptor family member nhr-40 (450 aa).

Positions 28–103 (GTLCVVCSDF…MGMDPKAIQH (76 aa)) form a DNA-binding region, nuclear receptor. NR C4-type zinc fingers lie at residues 31-51 (CVVCSDFASGIHYSVASCNGC) and 67-91 (CQFSGDCVVGKSVRCVCRSCRLKKC). Residues 173–450 (DVKAVIEDLL…LIDQLIIVGL (278 aa)) enclose the NR LBD domain.

Belongs to the nuclear hormone receptor family. Isoform b: Expressed in body wall muscle cells, pharyngeal muscles, rectal gland cells, vulval and uterine muscles and neurons in the head and ventral nerve cord. Isoform c: Expressed in body wall muscle cells, neurons in the head, nerve ring, ventral and dorsal nerve cords and epidermal cells in the tail.

The protein localises to the nucleus. In terms of biological role, orphan nuclear receptor. Plays a role in morphogenesis and elongation during embryonic and larval development. Plays a role in muscle formation and motility. The sequence is that of Nuclear hormone receptor family member nhr-40 from Caenorhabditis elegans.